The sequence spans 278 residues: Small ribosomal subunit protein uS2 (278 aa).

The tract at residues 235–278 (AEAAEEAPKRERKAKAAVKKERTKKEDDDALNANVAGKFAKDEE) is disordered. The span at 252-261 (VKKERTKKED) shows a compositional bias: basic and acidic residues.

Belongs to the universal ribosomal protein uS2 family.

The sequence is that of Small ribosomal subunit protein uS2 from Parabacteroides distasonis (strain ATCC 8503 / DSM 20701 / CIP 104284 / JCM 5825 / NCTC 11152).